The following is a 161-amino-acid chain: Regulatory protein RecX (161 aa).

This sequence belongs to the RecX family.

It localises to the cytoplasm. In terms of biological role, modulates RecA activity. The polypeptide is Regulatory protein RecX (Halorhodospira halophila (strain DSM 244 / SL1) (Ectothiorhodospira halophila (strain DSM 244 / SL1))).